Consider the following 215-residue polypeptide: Protein-L-isoaspartate O-methyltransferase (215 aa).

Ser-62 is an active-site residue.

It belongs to the methyltransferase superfamily. L-isoaspartyl/D-aspartyl protein methyltransferase family.

It is found in the cytoplasm. The catalysed reaction is [protein]-L-isoaspartate + S-adenosyl-L-methionine = [protein]-L-isoaspartate alpha-methyl ester + S-adenosyl-L-homocysteine. Functionally, catalyzes the methyl esterification of L-isoaspartyl residues in peptides and proteins that result from spontaneous decomposition of normal L-aspartyl and L-asparaginyl residues. It plays a role in the repair and/or degradation of damaged proteins. This Nitratidesulfovibrio vulgaris (strain DSM 19637 / Miyazaki F) (Desulfovibrio vulgaris) protein is Protein-L-isoaspartate O-methyltransferase.